A 197-amino-acid chain; its full sequence is CASP-like protein 1B2 (197 aa).

An N-acetylalanine modification is found at alanine 2. At 2–17 (AREKIVVAGGSTKSWK) the chain is on the cytoplasmic side. The chain crosses the membrane as a helical span at residues 18 to 38 (LLLGLRVFAFMATLAAAIVMS). Over 39-69 (LNKETKTLVVATIGTLPIKATLTAKFQDTPA) the chain is Extracellular. A helical transmembrane segment spans residues 70–90 (FVFFVIANVMVSFHNLLMIVL). The Cytoplasmic portion of the chain corresponds to 91 to 106 (QIFSRKLEYKGVRLLS). Residues 107–127 (IAILDMLNATLVSAAANAAVF) traverse the membrane as a helical segment. Residues 128–156 (VAELGKNGNKHAKWNKVCDRFATYCDHGA) are Extracellular-facing. A helical membrane pass occupies residues 157-177 (GALIAAFAGVILMLLVSSVSI). The Cytoplasmic portion of the chain corresponds to 178 to 197 (SRLLINSKHLSTTATTTAVV).

It belongs to the Casparian strip membrane proteins (CASP) family. As to quaternary structure, homodimer and heterodimers.

Its subcellular location is the cell membrane. The chain is CASP-like protein 1B2 from Arabidopsis lyrata subsp. lyrata (Lyre-leaved rock-cress).